The sequence spans 156 residues: ATP synthase subunit b (156 aa).

Residues 12–32 (VAFFIFVLFCMKFVWPPVIAA) form a helical membrane-spanning segment.

Belongs to the ATPase B chain family. In terms of assembly, F-type ATPases have 2 components, F(1) - the catalytic core - and F(0) - the membrane proton channel. F(1) has five subunits: alpha(3), beta(3), gamma(1), delta(1), epsilon(1). F(0) has three main subunits: a(1), b(2) and c(10-14). The alpha and beta chains form an alternating ring which encloses part of the gamma chain. F(1) is attached to F(0) by a central stalk formed by the gamma and epsilon chains, while a peripheral stalk is formed by the delta and b chains.

Its subcellular location is the cell inner membrane. F(1)F(0) ATP synthase produces ATP from ADP in the presence of a proton or sodium gradient. F-type ATPases consist of two structural domains, F(1) containing the extramembraneous catalytic core and F(0) containing the membrane proton channel, linked together by a central stalk and a peripheral stalk. During catalysis, ATP synthesis in the catalytic domain of F(1) is coupled via a rotary mechanism of the central stalk subunits to proton translocation. Functionally, component of the F(0) channel, it forms part of the peripheral stalk, linking F(1) to F(0). The protein is ATP synthase subunit b of Pseudomonas syringae pv. syringae (strain B728a).